We begin with the raw amino-acid sequence, 302 residues long: tRNA dimethylallyltransferase (302 aa).

An ATP-binding site is contributed by G10 to S17. Residue T12–S17 coordinates substrate. The tract at residues D35–Q38 is interaction with substrate tRNA.

Belongs to the IPP transferase family. Monomer. It depends on Mg(2+) as a cofactor.

The catalysed reaction is adenosine(37) in tRNA + dimethylallyl diphosphate = N(6)-dimethylallyladenosine(37) in tRNA + diphosphate. Its function is as follows. Catalyzes the transfer of a dimethylallyl group onto the adenine at position 37 in tRNAs that read codons beginning with uridine, leading to the formation of N6-(dimethylallyl)adenosine (i(6)A). In Acaryochloris marina (strain MBIC 11017), this protein is tRNA dimethylallyltransferase.